A 111-amino-acid chain; its full sequence is Ferredoxin, 2Fe-2S (111 aa).

4 residues coordinate [2Fe-2S] cluster: Cys-10, Cys-23, Cys-56, and Cys-60.

As to quaternary structure, homodimer in solution. [2Fe-2S] cluster is required as a cofactor.

Ferredoxins are iron-sulfur proteins that transfer electrons in a wide variety of metabolic reactions. The polypeptide is Ferredoxin, 2Fe-2S (fdx4) (Aquifex aeolicus (strain VF5)).